A 255-amino-acid chain; its full sequence is Type III pantothenate kinase (255 aa).

6 to 13 lines the ATP pocket; that stretch reads DVGNTNIV. Residues Tyr-100 and 107 to 110 contribute to the substrate site; that span reads GADR. The Proton acceptor role is filled by Asp-109. K(+) is bound at residue Asp-129. An ATP-binding site is contributed by Thr-132. Residue Thr-184 participates in substrate binding.

It belongs to the type III pantothenate kinase family. In terms of assembly, homodimer. Requires NH4(+) as cofactor. The cofactor is K(+).

It localises to the cytoplasm. It catalyses the reaction (R)-pantothenate + ATP = (R)-4'-phosphopantothenate + ADP + H(+). It participates in cofactor biosynthesis; coenzyme A biosynthesis; CoA from (R)-pantothenate: step 1/5. Functionally, catalyzes the phosphorylation of pantothenate (Pan), the first step in CoA biosynthesis. In Geobacter sulfurreducens (strain ATCC 51573 / DSM 12127 / PCA), this protein is Type III pantothenate kinase.